The following is a 134-amino-acid chain: Crustacean hyperglycemic hormones isoform A (134 aa).

An N-terminal signal peptide occupies residues 1–24; sequence MMACRTLCLVVVMVASLGTSGVGG. Gln61 carries the pyrrolidone carboxylic acid modification. Residue Phe63 is modified to D-phenylalanine; in form CHH-A-II. Cystine bridges form between Cys67–Cys103, Cys83–Cys99, and Cys86–Cys112. Val132 carries the post-translational modification Valine amide.

Belongs to the arthropod CHH/MIH/GIH/VIH hormone family. In terms of processing, stereoinversion of L-Phe (form CHH-A-I) to D-Phe (form CHH-A-II). As to expression, produced by the medulla terminalis X-organ in the eyestalks and transported to the sinus gland where they are stored and released. Present also in the ventral nervous system.

It is found in the secreted. CHH is the most abundant hormone in the sinus gland of isopods and decapods which controls the blood sugar level. Has a secretagogue action over the amylase released from the midgut gland. May act as a stress hormone. In terms of biological role, MIH may inhibit Y-organs where molting hormone (ecdysteroid) is secreted and a molting cycle is initiated when MIH secretion diminishes or stops. This Homarus americanus (American lobster) protein is Crustacean hyperglycemic hormones isoform A.